The primary structure comprises 339 residues: Annexin A2 (339 aa).

S2 is subject to N-acetylserine. Residues S2–Y24 form an S100A10-binding site region. Y24 carries the phosphotyrosine; by SRC modification. The residue at position 26 (S26) is a Phosphoserine; by PKC. Annexin repeat units lie at residues F33–K104 and T105–K176. K49 carries the N6-acetyllysine; alternate modification. K49 participates in a covalent cross-link: Glycyl lysine isopeptide (Lys-Gly) (interchain with G-Cter in SUMO1); alternate. A Glycyl lysine isopeptide (Lys-Gly) (interchain with G-Cter in SUMO2); alternate cross-link involves residue K49. K152 carries the post-translational modification N6-acetyllysine. S184 bears the Phosphoserine mark. Annexin repeat units lie at residues E189 to Q261 and N265 to G336. Y199 is subject to Phosphotyrosine. The residue at position 227 (K227) is an N6-acetyllysine.

This sequence belongs to the annexin family. Heterotetramer containing 2 light chains of S100A10/p11 and 2 heavy chains of ANXA2/p36. Interacts with ATP1B1. Interacts with DYSF. Interacts with COCH. Interacts (via repeat Annexin 1) with PCSK9 (via the C-terminal domain); the interaction inhibits the degradation of LDLR. Interacts with CEACAM1 (via the cytoplasmic domain); this interaction is regulated by phosphorylation of CEACAM1. Interacts with APPL2 and APPL1; targets APPL2 to endosomes and acting in parallel to RAB5A. Interacts with S100A4. May interact with UBAP2. Interacts with PLEKHG4B; this interaction is required for PLEKHG4B localization to cell-cell adhesions. In terms of assembly, (Microbial infection) Interacts with classical swine fever virus envelope glycoprotein E2. ISGylated.

It localises to the secreted. The protein resides in the extracellular space. The protein localises to the extracellular matrix. Its subcellular location is the basement membrane. It is found in the melanosome. Its function is as follows. Calcium-regulated membrane-binding protein whose affinity for calcium is greatly enhanced by anionic phospholipids. It binds two calcium ions with high affinity. May be involved in heat-stress response. Inhibits PCSK9-enhanced LDLR degradation, probably reduces PCSK9 protein levels via a translational mechanism but also competes with LDLR for binding with PCSK9. Binds to endosomes damaged by phagocytosis of particulate wear debris and participates in endosomal membrane stabilization, thereby limiting NLRP3 inflammasome activation. Required for endothelial cell surface plasmin generation and may support fibrinolytic surveillance and neoangiogenesis. Functionally, (Microbial infection) May serve as a receptor for classical swine fever virus (CSFV). Promotes CSFV infection. The chain is Annexin A2 (ANXA2) from Sus scrofa (Pig).